We begin with the raw amino-acid sequence, 345 residues long: Phosphoribosylformylglycinamidine cyclo-ligase (345 aa).

This sequence belongs to the AIR synthase family.

It is found in the cytoplasm. The enzyme catalyses 2-formamido-N(1)-(5-O-phospho-beta-D-ribosyl)acetamidine + ATP = 5-amino-1-(5-phospho-beta-D-ribosyl)imidazole + ADP + phosphate + H(+). The protein operates within purine metabolism; IMP biosynthesis via de novo pathway; 5-amino-1-(5-phospho-D-ribosyl)imidazole from N(2)-formyl-N(1)-(5-phospho-D-ribosyl)glycinamide: step 2/2. This chain is Phosphoribosylformylglycinamidine cyclo-ligase, found in Pectobacterium atrosepticum (strain SCRI 1043 / ATCC BAA-672) (Erwinia carotovora subsp. atroseptica).